Consider the following 732-residue polypeptide: Wall-associated receptor kinase 2 (732 aa).

The N-terminal stretch at 1 to 23 (MKVQEGLFVVAVFYLAYTQLVKG) is a signal peptide. The Extracellular segment spans residues 24–329 (QPRKECQTRC…RKVRPEYFRW (306 aa)). 6 N-linked (GlcNAc...) asparagine glycosylation sites follow: N57, N75, N111, N154, N217, and N246. Residues 230–277 (GDKTCKQVEYRGVCGGNSTCFDSTGGTGYNCKCLEGFEGNPYLPNGCQ) enclose the EGF-like 1 domain. 6 disulfides stabilise this stretch: C234/C249, C243/C260, C262/C276, C282/C295, C289/C304, and C306/C318. Residues 278 to 319 (DINECISSRHNCSEHSTCENTKGSFNCNCPSGYRKDSLNSCT) enclose the EGF-like 2; calcium-binding domain. The N-linked (GlcNAc...) asparagine glycan is linked to N288. The helical transmembrane segment at 330 to 350 (TQIFLGTTIGFSVIMLGISCL) threads the bilayer. Topologically, residues 351–732 (QQKIKHRKNT…VTTLDIEAGR (382 aa)) are cytoplasmic. T393 is subject to Phosphothreonine. Positions 404 to 677 (YHESRILGQG…KEVAAELEAL (274 aa)) constitute a Protein kinase domain. ATP contacts are provided by residues 410 to 418 (LGQGGQGTV) and K432. A Phosphotyrosine modification is found at Y477. D529 functions as the Proton acceptor in the catalytic mechanism. Phosphothreonine is present on residues T563 and T568. Position 576 is a phosphotyrosine (Y576).

The protein belongs to the protein kinase superfamily. Ser/Thr protein kinase family. In terms of tissue distribution, predominantly expressed in green tissues such as stems and leaves. Detected at organ junctions.

Its subcellular location is the membrane. The enzyme catalyses L-seryl-[protein] + ATP = O-phospho-L-seryl-[protein] + ADP + H(+). It catalyses the reaction L-threonyl-[protein] + ATP = O-phospho-L-threonyl-[protein] + ADP + H(+). In terms of biological role, serine/threonine-protein kinase that may function as a signaling receptor of extracellular matrix component. Binding to pectin may have significance in the control of cell expansion, morphogenesis and development. In Arabidopsis thaliana (Mouse-ear cress), this protein is Wall-associated receptor kinase 2 (WAK2).